The following is a 250-amino-acid chain: Ubiquinone/menaquinone biosynthesis C-methyltransferase UbiE (250 aa).

Residues Thr73, Asp94, and 122–123 (DA) contribute to the S-adenosyl-L-methionine site.

Belongs to the class I-like SAM-binding methyltransferase superfamily. MenG/UbiE family.

The catalysed reaction is a 2-demethylmenaquinol + S-adenosyl-L-methionine = a menaquinol + S-adenosyl-L-homocysteine + H(+). The enzyme catalyses a 2-methoxy-6-(all-trans-polyprenyl)benzene-1,4-diol + S-adenosyl-L-methionine = a 5-methoxy-2-methyl-3-(all-trans-polyprenyl)benzene-1,4-diol + S-adenosyl-L-homocysteine + H(+). It participates in quinol/quinone metabolism; menaquinone biosynthesis; menaquinol from 1,4-dihydroxy-2-naphthoate: step 2/2. Its pathway is cofactor biosynthesis; ubiquinone biosynthesis. Functionally, methyltransferase required for the conversion of demethylmenaquinol (DMKH2) to menaquinol (MKH2) and the conversion of 2-polyprenyl-6-methoxy-1,4-benzoquinol (DDMQH2) to 2-polyprenyl-3-methyl-6-methoxy-1,4-benzoquinol (DMQH2). The protein is Ubiquinone/menaquinone biosynthesis C-methyltransferase UbiE of Coxiella burnetii (strain CbuK_Q154) (Coxiella burnetii (strain Q154)).